A 609-amino-acid chain; its full sequence is Elongation factor 4 (609 aa).

Residues 5-187 enclose the tr-type G domain; that stretch reads SKIRNFSIIA…AIVAKIPPPE (183 aa). Residues 17–22 and 134–137 each bind GTP; these read DHGKST and NKID.

The protein belongs to the TRAFAC class translation factor GTPase superfamily. Classic translation factor GTPase family. LepA subfamily.

It localises to the cell inner membrane. The enzyme catalyses GTP + H2O = GDP + phosphate + H(+). Functionally, required for accurate and efficient protein synthesis under certain stress conditions. May act as a fidelity factor of the translation reaction, by catalyzing a one-codon backward translocation of tRNAs on improperly translocated ribosomes. Back-translocation proceeds from a post-translocation (POST) complex to a pre-translocation (PRE) complex, thus giving elongation factor G a second chance to translocate the tRNAs correctly. Binds to ribosomes in a GTP-dependent manner. In Erythrobacter litoralis (strain HTCC2594), this protein is Elongation factor 4.